An 86-amino-acid polypeptide reads, in one-letter code: Large ribosomal subunit protein eL20 (86 aa).

It belongs to the eukaryotic ribosomal protein eL20 family. In terms of assembly, part of the 50S ribosomal subunit. Binds 23S rRNA.

This chain is Large ribosomal subunit protein eL20, found in Metallosphaera sedula (strain ATCC 51363 / DSM 5348 / JCM 9185 / NBRC 15509 / TH2).